A 227-amino-acid polypeptide reads, in one-letter code: PKHD-type hydroxylase Bamb_4192 (227 aa).

Positions 78–178 (KVFPPLFNRY…RVASFFWIQS (101 aa)) constitute a Fe2OG dioxygenase domain. Residues His-96, Asp-98, and His-159 each coordinate Fe cation. Residue Arg-169 coordinates 2-oxoglutarate.

Fe(2+) serves as cofactor. It depends on L-ascorbate as a cofactor.

This Burkholderia ambifaria (strain ATCC BAA-244 / DSM 16087 / CCUG 44356 / LMG 19182 / AMMD) (Burkholderia cepacia (strain AMMD)) protein is PKHD-type hydroxylase Bamb_4192.